The primary structure comprises 258 residues: Small ribosomal subunit protein uS2 (258 aa).

The protein belongs to the universal ribosomal protein uS2 family.

The sequence is that of Small ribosomal subunit protein uS2 from Leuconostoc mesenteroides subsp. mesenteroides (strain ATCC 8293 / DSM 20343 / BCRC 11652 / CCM 1803 / JCM 6124 / NCDO 523 / NBRC 100496 / NCIMB 8023 / NCTC 12954 / NRRL B-1118 / 37Y).